The primary structure comprises 883 residues: MNEQYSALRSNVSMLGKVLGETIKDALGEHILERVETIRKLSKSSRAGNDANRQELLTTLQNLSNDELLPVARAFSQFLNLANTAEQYHSISPKGEAASNPEVIARTLRKLKNQPELSEDTIKKAVESLSLELVLTAHPTEITRRTLIHKMVEVNACLKQLDNKDIADYEHNQLMRRLRQLIAQSWHTDEIRKLRPSPVDEAKWGFAVVENSLWQGVPNYLRELNEQLEENLGYKLPVEFVPVRFTSWMGGDRDGNPNVTADITRHVLLLSRWKATDLFLKDIQVLVSELSMVEATPELLALVGEEGAAEPYRYLMKNLRSRLMATQAWLEARLKGEELPKPEGLLTQNEELWEPLYACYQSLQACGMGIIANGDLLDTLRRVKCFGVPLVRIDIRQESTRHTEALGELTRYLGIGDYESWSEADKQAFLIRELNSKRPLLPRNWQPSAETREVLDTCQVIAEAPQGSIAAYVISMAKTPSDVLAVHLLLKEAGIGFAMPVAPLFETLDDLNNANDVMTQLLNIDWYRGLIQGKQMVMIGYSDSAKDAGVMAASWAQYQAQDALIKTCEKAGIELTLFHGRGGSIGRGGAPAHAALLSQPPGSLKGGLRVTEQGEMIRFKYGLPEITVSSLSLYTGAILEANLLPPPEPKESWRRIMDELSVISCDLYRGYVRENKDFVPYFRSATPEQELGKLPLGSRPAKRRPTGGVESLRAIPWIFAWTQNRLMLPAWLGAGTALQKVVEDGKQSELEAMCRDWPFFSTRLGMLEMVFAKADLWLAEYYDQRLVDKTLWPLGKELRNLQEEDIKVVLAIANDSHLMADLPWIAESIQLRNIYTDPLNVLQAELLHRSRQAEKEGQEPDPRVEQALMVTIAGIAAGMRNTG.

Residues His-138 and Lys-546 contribute to the active site.

The protein belongs to the PEPCase type 1 family. Homotetramer. Mg(2+) serves as cofactor.

It catalyses the reaction oxaloacetate + phosphate = phosphoenolpyruvate + hydrogencarbonate. Its activity is regulated as follows. The enzyme has distinct binding sites for each of the allosteric effectors such as acetyl-CoA, fructose 1,6-bisphosphate, guanosine 3'-diphosphate 5'-diphosphate, long chain fatty acids, and L-aspartate. Forms oxaloacetate, a four-carbon dicarboxylic acid source for the tricarboxylic acid cycle. The protein is Phosphoenolpyruvate carboxylase of Escherichia coli O157:H7.